The chain runs to 151 residues: Nucleoside diphosphate kinase (151 aa).

ATP contacts are provided by Lys-9, Phe-57, Arg-85, Thr-91, Arg-102, and Asn-112. Catalysis depends on His-115, which acts as the Pros-phosphohistidine intermediate.

Belongs to the NDK family. It depends on Mg(2+) as a cofactor.

Its subcellular location is the cytoplasm. It carries out the reaction a 2'-deoxyribonucleoside 5'-diphosphate + ATP = a 2'-deoxyribonucleoside 5'-triphosphate + ADP. The catalysed reaction is a ribonucleoside 5'-diphosphate + ATP = a ribonucleoside 5'-triphosphate + ADP. Major role in the synthesis of nucleoside triphosphates other than ATP. The ATP gamma phosphate is transferred to the NDP beta phosphate via a ping-pong mechanism, using a phosphorylated active-site intermediate. This Archaeoglobus fulgidus (strain ATCC 49558 / DSM 4304 / JCM 9628 / NBRC 100126 / VC-16) protein is Nucleoside diphosphate kinase.